Here is a 456-residue protein sequence, read N- to C-terminus: UDP-N-acetylmuramate--L-alanine ligase (456 aa).

112–118 lines the ATP pocket; it reads GAHGKTT.

It belongs to the MurCDEF family.

Its subcellular location is the cytoplasm. It carries out the reaction UDP-N-acetyl-alpha-D-muramate + L-alanine + ATP = UDP-N-acetyl-alpha-D-muramoyl-L-alanine + ADP + phosphate + H(+). It participates in cell wall biogenesis; peptidoglycan biosynthesis. In terms of biological role, cell wall formation. The sequence is that of UDP-N-acetylmuramate--L-alanine ligase from Desulfatibacillum aliphaticivorans.